The chain runs to 358 residues: Putative ZDHHC-type palmitoyltransferase 4 (358 aa).

The next 4 helical transmembrane spans lie at 28–48 (FVGFATSLITLIAITYFTIIF), 57–77 (LFFIFNFFCDLSISLFLTYGI), 171–191 (YFFLFLSYLWVSVCYVLAHSL), and 210–230 (LLVIISSIGSFITFVAVGSFG). The DHHC domain maps to 127–177 (SYCKKCSKAKPPRCHHCSVCDKCVLKMDHHCPWIGGCVGFYNYRYFFLFLS). N255 and N296 each carry an N-linked (GlcNAc...) asparagine glycan. The interval 302–358 (NNKNNENNENNENNEIDNHNNNNNNNNNNNNNEKEDNINENDNLISYDTDEYNRHKK) is disordered. Residues 305–332 (NNENNENNENNEIDNHNNNNNNNNNNNN) show a composition bias toward low complexity.

This sequence belongs to the DHHC palmitoyltransferase family.

Its subcellular location is the membrane. The enzyme catalyses L-cysteinyl-[protein] + hexadecanoyl-CoA = S-hexadecanoyl-L-cysteinyl-[protein] + CoA. The polypeptide is Putative ZDHHC-type palmitoyltransferase 4 (Dictyostelium discoideum (Social amoeba)).